An 805-amino-acid polypeptide reads, in one-letter code: Sucrose synthase (805 aa).

The GT-B glycosyltransferase stretch occupies residues 275–752; sequence MVFNVVILSP…GLKRIEEKYT (478 aa).

The protein belongs to the glycosyltransferase 1 family. Plant sucrose synthase subfamily. As to expression, expression is at least 10-fold higher in tubers compared to photosynthetically active tissues.

It carries out the reaction an NDP-alpha-D-glucose + D-fructose = a ribonucleoside 5'-diphosphate + sucrose + H(+). Its function is as follows. Sucrose-cleaving enzyme that provides UDP-glucose and fructose for various metabolic pathways. This is Sucrose synthase from Solanum tuberosum (Potato).